The chain runs to 556 residues: 2-succinyl-5-enolpyruvyl-6-hydroxy-3-cyclohexene-1-carboxylate synthase (556 aa).

Belongs to the TPP enzyme family. MenD subfamily. As to quaternary structure, homodimer. Mg(2+) is required as a cofactor. Requires Mn(2+) as cofactor. It depends on thiamine diphosphate as a cofactor.

The enzyme catalyses isochorismate + 2-oxoglutarate + H(+) = 5-enolpyruvoyl-6-hydroxy-2-succinyl-cyclohex-3-ene-1-carboxylate + CO2. The protein operates within quinol/quinone metabolism; 1,4-dihydroxy-2-naphthoate biosynthesis; 1,4-dihydroxy-2-naphthoate from chorismate: step 2/7. It participates in quinol/quinone metabolism; menaquinone biosynthesis. Its function is as follows. Catalyzes the thiamine diphosphate-dependent decarboxylation of 2-oxoglutarate and the subsequent addition of the resulting succinic semialdehyde-thiamine pyrophosphate anion to isochorismate to yield 2-succinyl-5-enolpyruvyl-6-hydroxy-3-cyclohexene-1-carboxylate (SEPHCHC). In Escherichia coli O127:H6 (strain E2348/69 / EPEC), this protein is 2-succinyl-5-enolpyruvyl-6-hydroxy-3-cyclohexene-1-carboxylate synthase.